The following is a 428-amino-acid chain: Glutamyl-tRNA reductase (428 aa).

Residues 49 to 52 (TCNR), S109, 114 to 116 (EGQ), and Q120 contribute to the substrate site. Catalysis depends on C50, which acts as the Nucleophile. An NADP(+)-binding site is contributed by 189–194 (GAGKMS).

The protein belongs to the glutamyl-tRNA reductase family. As to quaternary structure, homodimer.

The enzyme catalyses (S)-4-amino-5-oxopentanoate + tRNA(Glu) + NADP(+) = L-glutamyl-tRNA(Glu) + NADPH + H(+). It functions in the pathway porphyrin-containing compound metabolism; protoporphyrin-IX biosynthesis; 5-aminolevulinate from L-glutamyl-tRNA(Glu): step 1/2. It participates in porphyrin-containing compound metabolism; chlorophyll biosynthesis. Functionally, catalyzes the NADPH-dependent reduction of glutamyl-tRNA(Glu) to glutamate 1-semialdehyde (GSA). In Trichormus variabilis (strain ATCC 29413 / PCC 7937) (Anabaena variabilis), this protein is Glutamyl-tRNA reductase.